Consider the following 407-residue polypeptide: BRCA1-A complex subunit Abraxas 1 (407 aa).

The MPN domain maps to 7–155 (LGVLSGFVLG…THCLEHALYK (149 aa)). Residue serine 48 is modified to Phosphoserine. A coiled-coil region spans residues 209 to 259 (LKEVHKINEMYAAVQEELKSICQKVEQSEREVEKLLMDVNQLKEVRRTQQA). A disordered region spans residues 344-407 (KRKALDTHDQ…DADYPRSPTF (64 aa)). Basic and acidic residues predominate over residues 347-366 (ALDTHDQGSVKRPRLLETES). Residues serine 384, serine 385, serine 394, and serine 404 each carry the phosphoserine modification. A compositionally biased stretch (acidic residues) spans 388–399 (IDIEMGSPEDDA). Positions 404 to 407 (SPTF) match the pSXXF motif motif.

This sequence belongs to the FAM175 family. Abraxas subfamily. Component of the ARISC complex, at least composed of UIMC1/RAP80, ABRAXAS1, BRCC3/BRCC36, BABAM2 and BABAM1/NBA1. Component of the BRCA1-A complex, at least composed of the BRCA1, BARD1, UIMC1/RAP80, ABRAXAS1, BRCC3/BRCC36, BABAM2 and BABAM1/NBA1. In the complex, interacts directly with UIMC1/RAP80, BRCC3/BRCC36 and BABAM2. Homodimer. Interacts directly (when phosphorylated at Ser-404) with BRCA1. The phosphorylated homodimer can interact directly with two BRCA1 chains, giving rise to a heterotetramer. Binds polyubiquitin. Phosphorylation of Ser-404 of the pSXXF motif by ATM or ATR constitutes a specific recognition motif for the BRCT domain of BRCA1.

It is found in the nucleus. In terms of biological role, involved in DNA damage response and double-strand break (DSB) repair. Component of the BRCA1-A complex, acting as a central scaffold protein that assembles the various components of the complex and mediates the recruitment of BRCA1. The BRCA1-A complex specifically recognizes 'Lys-63'-linked ubiquitinated histones H2A and H2AX at DNA lesion sites, leading to target the BRCA1-BARD1 heterodimer to sites of DNA damage at DSBs. This complex also possesses deubiquitinase activity that specifically removes 'Lys-63'-linked ubiquitin on histones H2A and H2AX. This chain is BRCA1-A complex subunit Abraxas 1, found in Mus musculus (Mouse).